The primary structure comprises 346 residues: tRNA N6-adenosine threonylcarbamoyltransferase (346 aa).

Residues H111 and H115 each coordinate Fe cation. Residues 134–138, D167, G180, and N279 contribute to the substrate site; that span reads LVSGG. D307 contributes to the Fe cation binding site.

Belongs to the KAE1 / TsaD family. The cofactor is Fe(2+).

The protein resides in the cytoplasm. It carries out the reaction L-threonylcarbamoyladenylate + adenosine(37) in tRNA = N(6)-L-threonylcarbamoyladenosine(37) in tRNA + AMP + H(+). Functionally, required for the formation of a threonylcarbamoyl group on adenosine at position 37 (t(6)A37) in tRNAs that read codons beginning with adenine. Is involved in the transfer of the threonylcarbamoyl moiety of threonylcarbamoyl-AMP (TC-AMP) to the N6 group of A37, together with TsaE and TsaB. TsaD likely plays a direct catalytic role in this reaction. The sequence is that of tRNA N6-adenosine threonylcarbamoyltransferase from Burkholderia multivorans (strain ATCC 17616 / 249).